Reading from the N-terminus, the 102-residue chain is ATP-dependent Clp protease adapter protein ClpS (102 aa).

This sequence belongs to the ClpS family. In terms of assembly, binds to the N-terminal domain of the chaperone ClpA.

Functionally, involved in the modulation of the specificity of the ClpAP-mediated ATP-dependent protein degradation. In Dechloromonas aromatica (strain RCB), this protein is ATP-dependent Clp protease adapter protein ClpS.